The following is a 374-amino-acid chain: MFPPTRVQASSRVVLKIFHFILVAFSLRSRRLSRLVLWLQFLGWLTWFISMWTQSVIYAQTIDCTLDCSLRHILTFFQTVSHAFIVVTSFLDGFRIKQDQLDEPIAFEDSDPWLAFTVLAMLVPTLGVEYLVCSNAPEYAFRIRIYHLKTLPSFLALQVQIISFILEVMKVNIRVRQTKLQLLILARELSCRWPQRKQKPQFSDQQAHRVKDLKRRYNDLHYLFVRINGYFGGSLLTIIIVHFAIFVSNSYWLFVDIRTRPWRIYAILLNLGFIFNVALQMAAACWHCQQSYNLGRQIGCLISKLVKPQGSKLYNDLVSEFSLQTLHQRFVVTAKDFFSLNLHLLSSMFAAVVTYLVILIQFMFAERSSTRGSG.

The Cytoplasmic segment spans residues 1–6; the sequence is MFPPTR. The helical transmembrane segment at 7-27 threads the bilayer; the sequence is VQASSRVVLKIFHFILVAFSL. Residues 28 to 36 lie on the Extracellular side of the membrane; it reads RSRRLSRLV. A helical transmembrane segment spans residues 37-57; it reads LWLQFLGWLTWFISMWTQSVI. The Cytoplasmic segment spans residues 58–72; sequence YAQTIDCTLDCSLRH. A helical membrane pass occupies residues 73–93; the sequence is ILTFFQTVSHAFIVVTSFLDG. At 94–112 the chain is on the extracellular side; it reads FRIKQDQLDEPIAFEDSDP. Residues 113–133 traverse the membrane as a helical segment; it reads WLAFTVLAMLVPTLGVEYLVC. The Cytoplasmic segment spans residues 134 to 226; sequence SNAPEYAFRI…YNDLHYLFVR (93 aa). Residues 227–247 traverse the membrane as a helical segment; it reads INGYFGGSLLTIIIVHFAIFV. Over 248–263 the chain is Extracellular; it reads SNSYWLFVDIRTRPWR. The chain crosses the membrane as a helical span at residues 264–284; the sequence is IYAILLNLGFIFNVALQMAAA. The Cytoplasmic portion of the chain corresponds to 285–343; that stretch reads CWHCQQSYNLGRQIGCLISKLVKPQGSKLYNDLVSEFSLQTLHQRFVVTAKDFFSLNLH. The chain crosses the membrane as a helical span at residues 344-364; that stretch reads LLSSMFAAVVTYLVILIQFMF. The Extracellular segment spans residues 365–374; it reads AERSSTRGSG.

It belongs to the insect chemoreceptor superfamily. Gustatory receptor (GR) family. Gr2a subfamily. In terms of tissue distribution, expressed in the adult labellar chemosensory neurons and labral sense organ. Expressed in neurons of the dorsal pharyngeal sense organ of larvae.

The protein resides in the cell membrane. Its function is as follows. Probable gustatory receptor which mediates acceptance or avoidance behavior, depending on its substrates. This is Gustatory receptor 23a (Gr23a) from Drosophila melanogaster (Fruit fly).